Here is a 61-residue protein sequence, read N- to C-terminus: Small ribosomal subunit protein uS14B (61 aa).

Zn(2+) is bound by residues cysteine 24, cysteine 27, cysteine 40, and cysteine 43.

It belongs to the universal ribosomal protein uS14 family. Zinc-binding uS14 subfamily. Part of the 30S ribosomal subunit. Contacts proteins S3 and S10. Requires Zn(2+) as cofactor.

Functionally, binds 16S rRNA, required for the assembly of 30S particles and may also be responsible for determining the conformation of the 16S rRNA at the A site. The sequence is that of Small ribosomal subunit protein uS14B from Bacillus velezensis (strain DSM 23117 / BGSC 10A6 / LMG 26770 / FZB42) (Bacillus amyloliquefaciens subsp. plantarum).